Reading from the N-terminus, the 244-residue chain is 7-cyano-7-deazaguanine synthase (244 aa).

Residue 17–27 (FSGGQDSTTCL) coordinates ATP. C205, C220, C223, and C226 together coordinate Zn(2+).

It belongs to the QueC family. The cofactor is Zn(2+).

The catalysed reaction is 7-carboxy-7-deazaguanine + NH4(+) + ATP = 7-cyano-7-deazaguanine + ADP + phosphate + H2O + H(+). Its pathway is purine metabolism; 7-cyano-7-deazaguanine biosynthesis. Catalyzes the ATP-dependent conversion of 7-carboxy-7-deazaguanine (CDG) to 7-cyano-7-deazaguanine (preQ(0)). This chain is 7-cyano-7-deazaguanine synthase, found in Bordetella pertussis (strain Tohama I / ATCC BAA-589 / NCTC 13251).